The primary structure comprises 306 residues: Pantothenate kinase (306 aa).

90–97 (GSVAVGKS) provides a ligand contact to ATP.

The protein belongs to the prokaryotic pantothenate kinase family.

It localises to the cytoplasm. The catalysed reaction is (R)-pantothenate + ATP = (R)-4'-phosphopantothenate + ADP + H(+). Its pathway is cofactor biosynthesis; coenzyme A biosynthesis; CoA from (R)-pantothenate: step 1/5. The protein is Pantothenate kinase of Lactococcus lactis subsp. cremoris (strain SK11).